Reading from the N-terminus, the 494-residue chain is GPI alpha-1,6-mannosyltransferase 2 (494 aa).

Residues 1 to 13 (MWSLDPSQKEVLR) lie on the Cytoplasmic side of the membrane. A helical membrane pass occupies residues 14–34 (FAVSCRILTLMLQALFNIIIP). The Lumenal segment spans residues 35-77 (DHHADAFSPPRLASSCSVDQLVEGLLGGLSRWDAEHFLFIAEH). A helical transmembrane segment spans residues 78 to 98 (GYLYEHNFAFFPGFPLALLMG). At 99–113 (TELLRPLQGLLSQRS) the chain is on the cytoplasmic side. A helical membrane pass occupies residues 114 to 134 (CLLVSVALLNFLFSVLAAVTL). The Lumenal portion of the chain corresponds to 135–136 (HD). The helical transmembrane segment at 137-157 (LGCLVLGCPRQAFYAAMLFCL) threads the bilayer. Over 158–161 (SPAN) the chain is Cytoplasmic. The chain crosses the membrane as a helical span at residues 162 to 182 (VFLAAGYSEALFAFLTFSAMG). Over 183–192 (QLERGRSWAS) the chain is Lumenal. A helical membrane pass occupies residues 193–213 (GLLFALATGVRSNGLVSVGFL). Topologically, residues 214–234 (LHAQCRGFFSSLVVLNPLKPL) are cytoplasmic. The helical transmembrane segment at 235 to 255 (FKLMASLCLSVLTVSLPFALF) threads the bilayer. Topologically, residues 256–327 (QYYAYTQFCL…RYYELRQVPN (72 aa)) are lumenal. Residues 328–348 (FLLATPVAVLVVWAAWTYVTT) form a helical membrane-spanning segment. Residues 349–379 (HPWLCLTLGLRRSKDSKKTLEKPHPGFLSPK) lie on the Cytoplasmic side of the membrane. A helical transmembrane segment spans residues 380-400 (VFVYLVHAAGLLLFGSLCMHV). The Lumenal portion of the chain corresponds to 401 to 470 (QVLTRLLCSS…NWRACSPVTR (70 aa)). Residues 471-491 (CILGYFLTYWLLGLLLHCNFL) form a helical membrane-spanning segment. The Cytoplasmic portion of the chain corresponds to 492–494 (PWT).

This sequence belongs to the PIGV family. Post-translationally, not N-glycosylated.

It localises to the endoplasmic reticulum membrane. It functions in the pathway glycolipid biosynthesis; glycosylphosphatidylinositol-anchor biosynthesis. Functionally, alpha-1,6-mannosyltransferase that catalyzes the transfer of the second mannose, via an alpha-1,6 bond, from a dolichol-phosphate-mannose (Dol-P-Man) to the alpha-D-Man-(1-&gt;4)-alpha-D-GlcN-(1-&gt;6)-(1-radyl,2-acyl-sn-glycero-3-phospho)-2-acyl-inositol intermediate to generate an alpha-D-Man-(1-&gt;6)-alpha-D-Man-(1-&gt;4)-alpha-D-GlcN-(1-&gt;6)-(1-radyl,2-acyl-sn-glycero-3-phospho)-2-acyl-inositol and participates in the seventh step of the glycosylphosphatidylinositol-anchor biosynthesis. Also transfers the second mannose on a 2-PEtn-alpha-D-Man-(1-&gt;4)-alpha-D-GlcN-(1-&gt;6)-(1-radyl,2-acyl-sn-glycero-3-phospho)-2-acyl-inositol. In Cricetulus griseus (Chinese hamster), this protein is GPI alpha-1,6-mannosyltransferase 2.